Reading from the N-terminus, the 775-residue chain is Thiamine repressible genes regulatory protein thi1 (775 aa).

The zn(2)-C6 fungal-type DNA-binding region spans Cys-39–Cys-65. Phosphoserine is present on Ser-208. Disordered stretches follow at residues Leu-676 to Phe-695 and Asn-754 to Gly-775.

The protein localises to the nucleus. In terms of biological role, transcription factor that activates the nmt1 promoter. Regulation of thiamine repressible genes. Positively regulates conjugation during meiosis. The sequence is that of Thiamine repressible genes regulatory protein thi1 (thi1) from Schizosaccharomyces pombe (strain 972 / ATCC 24843) (Fission yeast).